The primary structure comprises 111 residues: X antigen family member 3 (111 aa).

The segment at Met1–Val111 is disordered. The segment covering Pro29–Pro40 has biased composition (acidic residues). A compositionally biased stretch (basic and acidic residues) spans Glu97–Val111.

The protein belongs to the GAGE family.

The polypeptide is X antigen family member 3 (XAGE3) (Homo sapiens (Human)).